The following is a 196-amino-acid chain: Translation machinery-associated protein 22 (196 aa).

Residues 111–182 form the SUI1 domain; the sequence is IIIKRIERNK…EAKEYIEKLL (72 aa).

Belongs to the DENR family. As to quaternary structure, interacts with the 40S ribosomal subunit.

It is found in the cytoplasm. The sequence is that of Translation machinery-associated protein 22 (TMA22) from Lodderomyces elongisporus (strain ATCC 11503 / CBS 2605 / JCM 1781 / NBRC 1676 / NRRL YB-4239) (Yeast).